We begin with the raw amino-acid sequence, 135 residues long: Fatty acid-binding protein homolog 6 (135 aa).

Residues arginine 110 and arginine 130–tyrosine 132 contribute to the a fatty acid site.

It belongs to the calycin superfamily. Fatty-acid binding protein (FABP) family.

This is Fatty acid-binding protein homolog 6 (lbp-6) from Caenorhabditis elegans.